The following is a 140-amino-acid chain: ATP synthase epsilon chain (140 aa).

This sequence belongs to the ATPase epsilon chain family. In terms of assembly, F-type ATPases have 2 components, CF(1) - the catalytic core - and CF(0) - the membrane proton channel. CF(1) has five subunits: alpha(3), beta(3), gamma(1), delta(1), epsilon(1). CF(0) has three main subunits: a, b and c.

It is found in the cell inner membrane. Functionally, produces ATP from ADP in the presence of a proton gradient across the membrane. The polypeptide is ATP synthase epsilon chain (Vibrio parahaemolyticus serotype O3:K6 (strain RIMD 2210633)).